Here is a 384-residue protein sequence, read N- to C-terminus: Chaperone protein DnaJ (384 aa).

One can recognise a J domain in the interval 5-70; it reads DFYQVLGVSK…QKRQMYDQYG (66 aa). A CR-type zinc finger spans residues 138–216; it reads GKTVELEIPT…CHGHGRKEET (79 aa). 8 residues coordinate Zn(2+): cysteine 151, cysteine 154, cysteine 168, cysteine 171, cysteine 190, cysteine 193, cysteine 204, and cysteine 207. CXXCXGXG motif repeat units lie at residues 151-158, 168-175, 190-197, and 204-211; these read CRDCNGSG, CGHCHGSG, CPQCRGTG, and CRTCHGHG.

Belongs to the DnaJ family. Homodimer. Requires Zn(2+) as cofactor.

It is found in the cytoplasm. In terms of biological role, participates actively in the response to hyperosmotic and heat shock by preventing the aggregation of stress-denatured proteins and by disaggregating proteins, also in an autonomous, DnaK-independent fashion. Unfolded proteins bind initially to DnaJ; upon interaction with the DnaJ-bound protein, DnaK hydrolyzes its bound ATP, resulting in the formation of a stable complex. GrpE releases ADP from DnaK; ATP binding to DnaK triggers the release of the substrate protein, thus completing the reaction cycle. Several rounds of ATP-dependent interactions between DnaJ, DnaK and GrpE are required for fully efficient folding. Also involved, together with DnaK and GrpE, in the DNA replication of plasmids through activation of initiation proteins. The sequence is that of Chaperone protein DnaJ from Idiomarina loihiensis (strain ATCC BAA-735 / DSM 15497 / L2-TR).